A 211-amino-acid polypeptide reads, in one-letter code: Methylthioribulose-1-phosphate dehydratase (211 aa).

2 residues coordinate Zn(2+): histidine 101 and histidine 103.

It belongs to the aldolase class II family. MtnB subfamily. Zn(2+) serves as cofactor.

It carries out the reaction 5-(methylsulfanyl)-D-ribulose 1-phosphate = 5-methylsulfanyl-2,3-dioxopentyl phosphate + H2O. Its pathway is amino-acid biosynthesis; L-methionine biosynthesis via salvage pathway; L-methionine from S-methyl-5-thio-alpha-D-ribose 1-phosphate: step 2/6. Catalyzes the dehydration of methylthioribulose-1-phosphate (MTRu-1-P) into 2,3-diketo-5-methylthiopentyl-1-phosphate (DK-MTP-1-P). This Alcanivorax borkumensis (strain ATCC 700651 / DSM 11573 / NCIMB 13689 / SK2) protein is Methylthioribulose-1-phosphate dehydratase.